Here is a 213-residue protein sequence, read N- to C-terminus: Golgi to ER traffic protein 1 (213 aa).

Residues 1–4 (MESW) are Lumenal-facing. The helical transmembrane segment at 5–25 (LLVILAFLVLERLWPLIDSLI) threads the bilayer. Residues 26-98 (QRFAQANSTK…RTKASLKKVK (73 aa)) lie on the Cytoplasmic side of the membrane. The stretch at 55-99 (AQDQYVKWTKNNRTLEKINKQIEEEKKQLLSQVDRTKASLKKVKL) forms a coiled coil. A helical membrane pass occupies residues 99-119 (LVLITVPFTILKFYKGKMPIY). The Lumenal portion of the chain corresponds to 120-158 (DLPKGLFPNYLQGLFQHGWVYLALGPLNIKKVGDGTHVT). A helical membrane pass occupies residues 159 to 175 (VSLAIWLFALLKVVSTL). Over 176-213 (GNIWESLTAPAIPAPTITTDPIDQTNESEKPPVDQPVD) the chain is Cytoplasmic. Positions 193–213 (TTDPIDQTNESEKPPVDQPVD) are disordered.

It belongs to the WRB/GET1 family. In terms of assembly, component of the Golgi to ER traffic (GET) complex, which is composed of GET1, GET2 and GET3. Within the complex, GET1 and GET2 form a heterotetramer which is stabilized by phosphatidylinositol binding and which binds to the GET3 homodimer.

It localises to the endoplasmic reticulum membrane. The protein localises to the golgi apparatus membrane. In terms of biological role, required for the post-translational delivery of tail-anchored (TA) proteins to the endoplasmic reticulum. Together with GET2, acts as a membrane receptor for soluble GET3, which recognizes and selectively binds the transmembrane domain of TA proteins in the cytosol. The GET complex cooperates with the HDEL receptor ERD2 to mediate the ATP-dependent retrieval of resident ER proteins that contain a C-terminal H-D-E-L retention signal from the Golgi to the ER. The polypeptide is Golgi to ER traffic protein 1 (Kluyveromyces lactis (strain ATCC 8585 / CBS 2359 / DSM 70799 / NBRC 1267 / NRRL Y-1140 / WM37) (Yeast)).